A 65-amino-acid polypeptide reads, in one-letter code: Large ribosomal subunit protein bL35 (65 aa).

Residues 1-26 (MPKIKTLRGAAKRFKKTASGGFKRKQ) are disordered. The span at 10 to 26 (AAKRFKKTASGGFKRKQ) shows a compositional bias: basic residues.

Belongs to the bacterial ribosomal protein bL35 family.

In Histophilus somni (strain 2336) (Haemophilus somnus), this protein is Large ribosomal subunit protein bL35.